Reading from the N-terminus, the 207-residue chain is Serotonin N-acetyltransferase (207 aa).

Thr-31 carries the phosphothreonine; by PKA modification. Residues 35–194 form the N-acetyltransferase domain; sequence SEFRCLTPQD…SLTFMELQCS (160 aa). Leu-124 contacts substrate. Residues 124–126 and 132–137 each bind acetyl-CoA; these read LAV and QQGKGS. Met-159 is a binding site for substrate. 168-170 lines the acetyl-CoA pocket; the sequence is YEK. Ser-205 carries the post-translational modification Phosphoserine.

Belongs to the acetyltransferase family. AANAT subfamily. As to quaternary structure, monomer. Interacts with several 14-3-3 proteins, including YWHAB, YWHAE, YWHAG and YWHAZ, preferentially when phosphorylated at Thr-31. Phosphorylation on Ser-205 also allows binding to YWHAZ, but with lower affinity. The interaction with YWHAZ considerably increases affinity for arylalkylamines and acetyl-CoA and protects the enzyme from dephosphorylation and proteasomal degradation. It may also prevent thiol-dependent inactivation. Post-translationally, cAMP-dependent phosphorylation on both N-terminal Thr-31 and C-terminal Ser-205 regulates AANAT activity by promoting interaction with 14-3-3 proteins. In terms of tissue distribution, highly expressed in pineal gland and retina. Also detected in heart and intestine.

The protein resides in the cytoplasm. The catalysed reaction is a 2-arylethylamine + acetyl-CoA = an N-acetyl-2-arylethylamine + CoA + H(+). The protein operates within aromatic compound metabolism; melatonin biosynthesis; melatonin from serotonin: step 1/2. Controls the night/day rhythm of melatonin production in the pineal gland. Catalyzes the N-acetylation of serotonin into N-acetylserotonin, the penultimate step in the synthesis of melatonin. The sequence is that of Serotonin N-acetyltransferase (AANAT) from Mesocricetus auratus (Golden hamster).